A 226-amino-acid polypeptide reads, in one-letter code: Urease accessory protein UreF (226 aa).

This sequence belongs to the UreF family. UreD, UreF and UreG form a complex that acts as a GTP-hydrolysis-dependent molecular chaperone, activating the urease apoprotein by helping to assemble the nickel containing metallocenter of UreC. The UreE protein probably delivers the nickel.

The protein resides in the cytoplasm. Its function is as follows. Required for maturation of urease via the functional incorporation of the urease nickel metallocenter. The sequence is that of Urease accessory protein UreF from Burkholderia mallei (strain NCTC 10247).